Here is a 232-residue protein sequence, read N- to C-terminus: Lipopolysaccharide core heptose(II) kinase WaaY (232 aa).

The protein belongs to the protein kinase superfamily. RfaY/WaaY family.

The enzyme catalyses alpha-D-Glc-(1-&gt;3)-[L-alpha-D-Hep-(1-&gt;7)]-L-alpha-D-Hep-(1-&gt;3)-4-O-PO3(2-)-L-alpha-D-Hep-(1-&gt;5)-[alpha-Kdo-(2-&gt;4)]-alpha-Kdo-(2-&gt;6)-lipid A + ATP = alpha-D-Glc-(1-&gt;3)-[L-alpha-D-Hep-(1-&gt;7)]-4-O-PO3(2-)-L-alpha-D-Hep-(1-&gt;3)-4-O-PO3(2-)-L-alpha-D-Hep-(1-&gt;5)-[alpha-Kdo-(2-&gt;4)]-alpha-Kdo-(2-&gt;6)-lipid A + ADP + H(+). It participates in bacterial outer membrane biogenesis; LPS core biosynthesis. Kinase involved in the biosynthesis of the core oligosaccharide region of lipopolysaccharide (LPS). Catalyzes the phosphorylation of the second heptose unit (HepII) of the inner core. The protein is Lipopolysaccharide core heptose(II) kinase WaaY of Escherichia coli (strain K12).